The following is a 299-amino-acid chain: MKPDAHQVKQFLLNLQDTICQQLSAVDGAEFVEDSWQREAGGGGRSRVLRNGGVFEQAGVNFSHVHGEAMPASATAHRPELAGRSFEAMGISLVVHPHNPYVPTSHANVRFFIAEKPGAEPVWWFGGGFDLTPFYGFEEDAIHWHRTARDLCQPFGEDVYPRYKKWCDEYFYLKHRNEQRGIGGLFFDDLNTPDFDHCFAFMQAVGKGYTNAYLPIVERRKAMAYGERERNFQLYRRGRYVEFNLVWDRGTLFGLQTGGRTESILMSMPPLVRWEYDYHPEDGSPEAALSEFIKVRDWV.

S92 is a substrate binding site. Mn(2+) is bound by residues H96 and H106. The active-site Proton donor is the H106. 108–110 contributes to the substrate binding site; it reads NVR. Residues H145 and H175 each coordinate Mn(2+). An important for dimerization region spans residues 240 to 275; that stretch reads YVEFNLVWDRGTLFGLQTGGRTESILMSMPPLVRWE. 258-260 provides a ligand contact to substrate; the sequence is GGR.

This sequence belongs to the aerobic coproporphyrinogen-III oxidase family. As to quaternary structure, homodimer. Mn(2+) serves as cofactor.

The protein localises to the cytoplasm. The enzyme catalyses coproporphyrinogen III + O2 + 2 H(+) = protoporphyrinogen IX + 2 CO2 + 2 H2O. The protein operates within porphyrin-containing compound metabolism; protoporphyrin-IX biosynthesis; protoporphyrinogen-IX from coproporphyrinogen-III (O2 route): step 1/1. Functionally, involved in the heme biosynthesis. Catalyzes the aerobic oxidative decarboxylation of propionate groups of rings A and B of coproporphyrinogen-III to yield the vinyl groups in protoporphyrinogen-IX. The polypeptide is Oxygen-dependent coproporphyrinogen-III oxidase (Escherichia coli O17:K52:H18 (strain UMN026 / ExPEC)).